Here is a 541-residue protein sequence, read N- to C-terminus: MNTFTSNSSDLTTTATETSSFSTLYLLSTLQAFVAITLVMLLKKLMTDPNKKKPYLPPGPTGWPIIGMIPTMLKSRPVFRWLHSIMKQLNTEIACVKLGNTHVITVTCPKIAREILKQQDALFASRPLTYAQKILSNGYKTCVITPFGDQFKKMRKVVMTELVCPARHRWLHQKRSEENDHLTAWVYNMVKNSGSVDFRFMTRHYCGNAIKKLMFGTRTFSKNTAPDGGPTVEDVEHMEAMFEALGFTFAFCISDYLPMLTGLDLNGHEKIMRESSAIMDKYHDPIIDERIKMWREGKRTQIEDFLDIFISIKDEQGNPLLTADEIKPTIKELVMAAPDNPSNAVEWAMAEMVNKPEILRKAMEEIDRVVGKERLVQESDIPKLNYVKAILREAFRLHPVAAFNLPHVALSDTTVAGYHIPKGSQVLLSRYGLGRNPKVWADPLCFKPERHLNECSEVTLTENDLRFISFSTGKRGCAAPALGTALTTMMLARLLQGFTWKLPENETRVELMESSHDMFLAKPLVMVGDLRLPEHLYPTVK.

The helical transmembrane segment at 21–41 threads the bilayer; it reads FSTLYLLSTLQAFVAITLVML. Heme is bound at residue C477.

It belongs to the cytochrome P450 family. The cofactor is heme. As to expression, found in all tissues tested. Highest expression in roots, and low expression in stem.

Its subcellular location is the membrane. It catalyses the reaction L-tryptophan + 2 reduced [NADPH--hemoprotein reductase] + 2 O2 = (E)-(indol-3-yl)acetaldehyde oxime + 2 oxidized [NADPH--hemoprotein reductase] + CO2 + 3 H2O + 2 H(+). In terms of biological role, converts tryptophan to indole-3-acetaldoxime, a precursor for tryptophan-derived glucosinolates and indole-3-acetic acid (IAA). Involved in the biosynthetic pathway to 4-hydroxyindole-3-carbonyl nitrile (4-OH-ICN), a cyanogenic metabolite required for inducible pathogen defense. In Arabidopsis thaliana (Mouse-ear cress), this protein is Tryptophan N-monooxygenase 1 (CYP79B2).